Here is a 66-residue protein sequence, read N- to C-terminus: Large ribosomal subunit protein uL29 (66 aa).

Belongs to the universal ribosomal protein uL29 family.

This Bartonella tribocorum (strain CIP 105476 / IBS 506) protein is Large ribosomal subunit protein uL29.